A 540-amino-acid polypeptide reads, in one-letter code: Chaperonin GroEL 2/3 (540 aa).

ATP is bound by residues 30 to 33 (TLGP), Lys51, 87 to 91 (DGTTT), Gly415, 479 to 481 (NAA), and Asp495.

This sequence belongs to the chaperonin (HSP60) family. Forms a cylinder of 14 subunits composed of two heptameric rings stacked back-to-back. Interacts with the co-chaperonin GroES.

Its subcellular location is the cytoplasm. It carries out the reaction ATP + H2O + a folded polypeptide = ADP + phosphate + an unfolded polypeptide.. Functionally, together with its co-chaperonin GroES, plays an essential role in assisting protein folding. The GroEL-GroES system forms a nano-cage that allows encapsulation of the non-native substrate proteins and provides a physical environment optimized to promote and accelerate protein folding. The protein is Chaperonin GroEL 2/3 of Paraburkholderia xenovorans (strain LB400).